The chain runs to 774 residues: Two pore channel protein 2 (774 aa).

The Cytoplasmic segment spans residues M1–Y92. The chain crosses the membrane as a helical span at residues S93 to I113. Over E114–E140 the chain is Extracellular. A helical membrane pass occupies residues G141–I161. Topologically, residues G162–K170 are cytoplasmic. The helical transmembrane segment at W171–S191 threads the bilayer. Residues M192–N197 lie on the Extracellular side of the membrane. The chain crosses the membrane as a helical span at residues L198–K218. Residues K217 to K221 form an interaction with phosphatidylinositol 3,5-bisphosphate region. The Cytoplasmic segment spans residues T219 to S232. Residues V233 to A253 form a helical membrane-spanning segment. At K254 to Y267 the chain is on the extracellular side. The helical; Pore-forming intramembrane region spans F268–I292. Residues P293–S302 lie on the Extracellular side of the membrane. The helical transmembrane segment at I303–I323 threads the bilayer. Topologically, residues I324–V452 are cytoplasmic. A helical transmembrane segment spans residues L453 to K475. Topologically, residues S476–E486 are extracellular. A helical transmembrane segment spans residues I487–F507. The Cytoplasmic portion of the chain corresponds to G508–N518. The helical transmembrane segment at I519–F539 threads the bilayer. At K540 to N564 the chain is on the extracellular side. The chain crosses the membrane as a helical span at residues M565–A585. Topologically, residues S586–R596 are cytoplasmic. Residues A597–F617 traverse the membrane as a helical segment. The Extracellular portion of the chain corresponds to Q618–N658. N626, N632, and N637 each carry an N-linked (GlcNAc...) asparagine glycan. An intramembrane region (helical; Pore-forming) is located at residues F659 to F681. The Extracellular segment spans residues T682–Y696. Residues F697–L717 form a helical membrane-spanning segment. Residues E718–W774 are Cytoplasmic-facing.

It belongs to the calcium channel alpha-1 subunit (TC 1.A.1.11) family. Two pore calcium channel subfamily. As to quaternary structure, homodimer. Post-translationally, N-glycosylated.

The protein resides in the late endosome membrane. The protein localises to the lysosome membrane. The enzyme catalyses Na(+)(in) = Na(+)(out). It catalyses the reaction Ca(2+)(in) = Ca(2+)(out). In terms of biological role, intracellular channel initially characterized as a non-selective Ca(2+)-permeable channel activated by NAADP (nicotinic acid adenine dinucleotide phosphate), it is also a highly-selective Na(+) channel activated directly by PI(3,5)P2 (phosphatidylinositol 3,5-bisphosphate). Localizes to the lysosomal and late endosome membranes where it regulates organellar membrane excitability, membrane trafficking, and pH homeostasis. In Danio rerio (Zebrafish), this protein is Two pore channel protein 2 (tpcn2).